Reading from the N-terminus, the 59-residue chain is Gonadotropin-releasing hormone receptor (59 aa).

Over valine 1–alanine 2 the chain is Cytoplasmic. A helical transmembrane segment spans residues phenylalanine 3–phenylalanine 23. Residues aspartate 24–histidine 37 lie on the Extracellular side of the membrane. A helical membrane pass occupies residues phenylalanine 38–serine 58. Residue leucine 59 is a topological domain, cytoplasmic.

The protein belongs to the G-protein coupled receptor 1 family.

The protein localises to the cell membrane. Receptor for gonadotropin releasing hormone (GnRH) that mediates the action of GnRH to stimulate the secretion of the gonadotropic hormones luteinizing hormone (LH) and follicle-stimulating hormone (FSH). This receptor mediates its action by association with G-proteins that activate a phosphatidylinositol-calcium second messenger system. The polypeptide is Gonadotropin-releasing hormone receptor (GNRHR) (Macaca mulatta (Rhesus macaque)).